Consider the following 689-residue polypeptide: MKFENLLIEIGTEELPPKALRTLAESFQANFSEELTKAELPFESIEWYAAPRRLALYVKGLATAQEDKVVEKRGPAVQSAFDADGNPTKAAEGWARGNGITVAEAERLATDKGEWLVYRANVAGEPTSVLVPAMTQRALDKLPIPKPMRWGSNSTQFIRPVHTVTLLLGSELIAGEVLGIQSDRTIRGHRFMGESSFSLDHADNYLAALKERGKVIADYQARKALIKADAEKAAAVIGGNADIEESLLEEVASLVEWPVVLTAHFEEKFLAVPAEALVYTMKGDQKYFPVFSNDGKLLPNFIFVANIESKDPAQIIAGNEKVVRPRLADAEFFFNTDKKHTLASRLASLETVVFQKQLGTLKDRAERISALAGFIAGQIGASSEDAARAGLLSKCDLMTNMVMEFTDTQGTMGMHYARLDGEAEAVAVALEEQYKPKFSGDSVPSAGVSCAVALAEKLDTLSGIFGIGQAPKGAADPFALRRAAIGVLRIIVENKLPLDLVDLIAKAVELHGSNLSNALAADEVLEFLMGRFRAWYQDKGISTDVILAVLARRPTRPADFDDRILAVSHFRTLEQAAALAAANKRVSNILAKVEGELPSSINDALLSEAAEKALAAKLAEVTPVIAPLFAAGNYQQALTELAALRESVDQFFEDVMVMADDQALRNNRLALLGNLRDQFLHVADISLLQ.

It belongs to the class-II aminoacyl-tRNA synthetase family. In terms of assembly, tetramer of two alpha and two beta subunits.

It localises to the cytoplasm. It carries out the reaction tRNA(Gly) + glycine + ATP = glycyl-tRNA(Gly) + AMP + diphosphate. In Shewanella amazonensis (strain ATCC BAA-1098 / SB2B), this protein is Glycine--tRNA ligase beta subunit.